The chain runs to 124 residues: Small ribosomal subunit protein uS12c (124 aa).

Disordered stretches follow at residues Met1–Pro28 and Ala104–Ser124. 2 stretches are compositionally biased toward basic residues: residues Glu11–Lys20 and Asp109–Ser124.

This sequence belongs to the universal ribosomal protein uS12 family. Part of the 30S ribosomal subunit.

The protein resides in the plastid. Its subcellular location is the chloroplast. In terms of biological role, with S4 and S5 plays an important role in translational accuracy. Located at the interface of the 30S and 50S subunits. This chain is Small ribosomal subunit protein uS12c (rps12), found in Porphyra purpurea (Red seaweed).